A 1571-amino-acid chain; its full sequence is Neurexin-3 (1571 aa).

The first 27 residues, 1 to 27 (MSFTLHSVFFTLKVSIFLGSLVGLCLG), serve as a signal peptide directing secretion. The region spanning 28–202 (LEFMGLPNQW…SVQLEAEGPC (175 aa)) is the Laminin G-like 1 domain. Over 28 to 1496 (LEFMGLPNQW…EVIRESSSTT (1469 aa)) the chain is Extracellular. N-linked (GlcNAc...) asparagine glycans are attached at residues Asn-58 and Asn-105. Positions 198–235 (AEGPCGERPCENGGICFLLDGHPTCDCSTTGYGGTLCS) constitute an EGF-like 1 domain. 3 disulfide bridges follow: Cys-202–Cys-213, Cys-207–Cys-222, and Cys-224–Cys-234. Laminin G-like domains are found at residues 258–440 (VATF…VFKC) and 447–639 (DPIN…KSSC). Ca(2+)-binding residues include Asp-304, Leu-321, and Met-374. 5 disulfides stabilise this stretch: Cys-404/Cys-440, Cys-610/Cys-639, Cys-647/Cys-658, Cys-652/Cys-667, and Cys-669/Cys-679. Residues 643-680 (SAKQCDSYPCKNNAVCKDGWNRFICDCTGTGYWGRTCE) enclose the EGF-like 2 domain. Laminin G-like domains lie at 685 to 857 (ILSY…IDYC) and 871 to 1046 (DPVT…ERGC). Residues Asp-732 and Leu-749 each coordinate Ca(2+). A glycan (N-linked (GlcNAc...) asparagine) is linked at Asn-757. Arg-807 serves as a coordination point for Ca(2+). Disulfide bonds link Cys-1018–Cys-1046, Cys-1053–Cys-1064, Cys-1058–Cys-1073, and Cys-1075–Cys-1085. The region spanning 1049–1086 (PSTTCQEDSCANQGVCMQQWEGFTCDCSMTSYSGNQCN) is the EGF-like 3 domain. The region spanning 1090-1290 (ATYIFGKSGG…NPNIKINGSV (201 aa)) is the Laminin G-like 6 domain. Residues Asp-1142 and Ile-1159 each coordinate Ca(2+). N-linked (GlcNAc...) asparagine glycosylation is present at Asn-1189. Ca(2+) is bound by residues Ile-1241 and Asn-1243. N-linked (GlcNAc...) asparagine glycosylation is found at Asn-1287 and Asn-1331. Residues 1324-1348 (ATTTTRKNRSTASIQPTSDDLVSSA) are disordered. Residues 1333–1348 (STASIQPTSDDLVSSA) are compositionally biased toward polar residues. A glycan (O-linked (Xyl...) (heparan sulfate) serine) is linked at Ser-1347. A helical membrane pass occupies residues 1497-1517 (GMVVGIVAAAALCILILLYAM). Topologically, residues 1518–1571 (YKYRNRDEGSYQVDETRNYISNSAQSNGTLMKEKQASSKSGHKKQKNKDKEYYV) are cytoplasmic. Residues 1539-1571 (NSAQSNGTLMKEKQASSKSGHKKQKNKDKEYYV) are disordered.

Belongs to the neurexin family. As to quaternary structure, the laminin G-like domain 2 binds to NXPH1. Specific isoforms bind to alpha-dystroglycan. The cytoplasmic C-terminal region binds to CASK. Specific isoforms bind neuroligins NLGN1, NLGN2 and NLGN3. Interacts with CLSTN3. O-glycosylated; contains heparan sulfate. Heparan sulfate attachment is required for synapse development by mediating interactions with neuroligins. Brain and arteries (at protein level).

The protein localises to the presynaptic cell membrane. Neuronal cell surface protein that may be involved in cell recognition and cell adhesion. May mediate intracellular signaling. The polypeptide is Neurexin-3 (Nrxn3) (Mus musculus (Mouse)).